We begin with the raw amino-acid sequence, 505 residues long: Catalase (505 aa).

Residues 1–25 are disordered; it reads MSQQDKKLTGVFGHPVSDRENSMTA. Catalysis depends on residues H56 and N129. A heme-binding site is contributed by Y339.

This sequence belongs to the catalase family. As to quaternary structure, homodimer. Requires heme as cofactor.

It carries out the reaction 2 H2O2 = O2 + 2 H2O. Decomposes hydrogen peroxide into water and oxygen; serves to protect cells from the toxic effects of hydrogen peroxide. This is Catalase (katA) from Staphylococcus aureus (strain MSSA476).